Consider the following 422-residue polypeptide: Phospho-N-acetylmuramoyl-pentapeptide-transferase (422 aa).

The next 9 membrane-spanning stretches (helical) occupy residues 28 to 48 (LMAVILALLISSIWGDKFINL), 71 to 91 (VGVPSMGGVIIIVAILIPCLL), 95 to 115 (LDNIYMILMLITTVWLGSLGF), 136 to 156 (IIGQVGLGLIVGLTLYLSPDV), 211 to 231 (AGWFLFVIITIFVVTAVSNGA), 239 to 259 (GMAAGNSAIIGATLGILAYVS), 279 to 299 (LVIYICAFIGALIGFLWYNAY), 313 to 333 (IGGIIAVFAIIIHKELLIPIL), and 399 to 419 (KITVRFWIVTIVLAAITIITL).

Belongs to the glycosyltransferase 4 family. MraY subfamily. Requires Mg(2+) as cofactor.

It localises to the cell inner membrane. It carries out the reaction UDP-N-acetyl-alpha-D-muramoyl-L-alanyl-gamma-D-glutamyl-meso-2,6-diaminopimeloyl-D-alanyl-D-alanine + di-trans,octa-cis-undecaprenyl phosphate = di-trans,octa-cis-undecaprenyl diphospho-N-acetyl-alpha-D-muramoyl-L-alanyl-D-glutamyl-meso-2,6-diaminopimeloyl-D-alanyl-D-alanine + UMP. The protein operates within cell wall biogenesis; peptidoglycan biosynthesis. In terms of biological role, catalyzes the initial step of the lipid cycle reactions in the biosynthesis of the cell wall peptidoglycan: transfers peptidoglycan precursor phospho-MurNAc-pentapeptide from UDP-MurNAc-pentapeptide onto the lipid carrier undecaprenyl phosphate, yielding undecaprenyl-pyrophosphoryl-MurNAc-pentapeptide, known as lipid I. The polypeptide is Phospho-N-acetylmuramoyl-pentapeptide-transferase (Bacteroides thetaiotaomicron (strain ATCC 29148 / DSM 2079 / JCM 5827 / CCUG 10774 / NCTC 10582 / VPI-5482 / E50)).